The chain runs to 190 residues: Protein soem-1 (190 aa).

The region spanning 96–190 is the SH2 domain; the sequence is YMEQNMNRVE…LVLKNQLKPV (95 aa).

Interacts with abl-1. As to expression, expressed in PQR, but not AQR, Q neuroblast descendents.

In terms of biological role, functions downstream of migratory protein mig-13 and may play a role in the control of Q neuroblast migration during larval development. This chain is Protein soem-1, found in Caenorhabditis elegans.